The chain runs to 290 residues: Probable ATP-dependent kinase TDA10 (290 aa).

Position 38-45 (38-45) interacts with ATP; sequence GPQGSGKS.

This sequence belongs to the GLYK kinase family.

Its subcellular location is the cytoplasm. The protein localises to the nucleus. ATP-dependent kinase whose specificity is not yet known. This Saccharomyces cerevisiae (strain ATCC 204508 / S288c) (Baker's yeast) protein is Probable ATP-dependent kinase TDA10 (TDA10).